The chain runs to 93 residues: Small ribosomal subunit protein uS19 (93 aa).

This sequence belongs to the universal ribosomal protein uS19 family.

Functionally, protein S19 forms a complex with S13 that binds strongly to the 16S ribosomal RNA. This chain is Small ribosomal subunit protein uS19, found in Oleidesulfovibrio alaskensis (strain ATCC BAA-1058 / DSM 17464 / G20) (Desulfovibrio alaskensis).